The following is a 672-amino-acid chain: Single-strand DNA endonuclease ASTE1 (672 aa).

The tract at residues 349–398 (TFLHTQVENMQRPNAHRISQPIRQIIYGLLLNGPSHAEDIAQNTLPSQLL) is interaction with SHLD2.

This sequence belongs to the asteroid family. In terms of assembly, interacts with SHLD1, SHLD2, SHLD3, RIF1 and MAD2L2/REV7.

In terms of biological role, structure-specific DNA endonuclease that specifically cleaves single-stranded DNA and 3' overhang DNA. Contributes to the control of DNA double-strand break repair choice by antagonizing BRCA1-dependent homologous recombination (HR) and promoting non-homologous end-joining (NHEJ). Recruited to the single-stranded DNA ends by SHLD2 and cleaves the 3' exposed DNA ends, therefore inhibiting DNA end resection (necessary for HR) and promoting DNA end protection (necessary for NHEJ). This Mus musculus (Mouse) protein is Single-strand DNA endonuclease ASTE1 (Aste1).